A 402-amino-acid polypeptide reads, in one-letter code: Sulfate adenylyltransferase (402 aa).

Belongs to the sulfate adenylyltransferase family.

The enzyme catalyses sulfate + ATP + H(+) = adenosine 5'-phosphosulfate + diphosphate. Its pathway is sulfur metabolism; hydrogen sulfide biosynthesis; sulfite from sulfate: step 1/3. The chain is Sulfate adenylyltransferase from Thiobacillus denitrificans (strain ATCC 25259 / T1).